The primary structure comprises 227 residues: UPF0758 protein llmg_1515 (227 aa).

The MPN domain maps to 103-225; the sequence is QVLSSKEYGM…YYSFRERDSN (123 aa). The Zn(2+) site is built by H174, H176, and D187. Positions 174–187 match the JAMM motif motif; sequence HNHPSGNLQPSQAD.

This sequence belongs to the UPF0758 family.

This Lactococcus lactis subsp. cremoris (strain MG1363) protein is UPF0758 protein llmg_1515.